The chain runs to 493 residues: EGF-containing fibulin-like extracellular matrix protein 1 (493 aa).

An N-terminal signal peptide occupies residues Met1 to Ser17. The EGF-like 1; atypical domain occupies Tyr26–Leu71. The 41-residue stretch at Asp173 to Val213 folds into the EGF-like 2; calcium-binding domain. Intrachain disulfides connect Cys177–Cys190, Cys184–Cys199, Cys201–Cys212, Cys218–Cys228, Cys224–Cys237, Cys239–Cys252, Cys258–Cys268, Cys264–Cys277, Cys279–Cys292, Cys298–Cys309, Cys305–Cys318, Cys320–Cys332, Cys338–Cys350, Cys344–Cys359, and Cys365–Cys377. The EGF-like 3; calcium-binding domain maps to Asp214 to Val253. N-linked (GlcNAc...) asparagine glycosylation occurs at Asn249. One can recognise an EGF-like 4; calcium-binding domain in the interval Asp254–Glu293. The interval Asp259 to Phe493 is mediates interaction with TIMP3. An EGF-like 5; calcium-binding domain is found at Asp294–Gln333. Residues Asp334–Val378 form the EGF-like 6; calcium-binding domain.

It belongs to the fibulin family. As to quaternary structure, interacts with ECM1. Interacts with TIMP3.

The protein resides in the secreted. It localises to the extracellular space. Its subcellular location is the extracellular matrix. Its function is as follows. Binds EGFR, the EGF receptor, inducing EGFR autophosphorylation and the activation of downstream signaling pathways. May play a role in cell adhesion and migration. May function as a negative regulator of chondrocyte differentiation. In the olfactory epithelium, it may regulate glial cell migration, differentiation and the ability of glial cells to support neuronal neurite outgrowth. This Macaca fascicularis (Crab-eating macaque) protein is EGF-containing fibulin-like extracellular matrix protein 1 (EFEMP1).